The primary structure comprises 235 residues: Sugar fermentation stimulation protein homolog (235 aa).

The protein belongs to the SfsA family.

This Pseudomonas paraeruginosa (strain DSM 24068 / PA7) (Pseudomonas aeruginosa (strain PA7)) protein is Sugar fermentation stimulation protein homolog.